A 272-amino-acid chain; its full sequence is Formamidopyrimidine-DNA glycosylase (272 aa).

The active-site Schiff-base intermediate with DNA is proline 2. Glutamate 3 (proton donor) is an active-site residue. Catalysis depends on lysine 57, which acts as the Proton donor; for beta-elimination activity. 3 residues coordinate DNA: histidine 90, arginine 109, and lysine 150. Residues histidine 235 to proline 269 form an FPG-type zinc finger. The active-site Proton donor; for delta-elimination activity is arginine 259.

Belongs to the FPG family. As to quaternary structure, monomer. Zn(2+) is required as a cofactor.

It carries out the reaction Hydrolysis of DNA containing ring-opened 7-methylguanine residues, releasing 2,6-diamino-4-hydroxy-5-(N-methyl)formamidopyrimidine.. The enzyme catalyses 2'-deoxyribonucleotide-(2'-deoxyribose 5'-phosphate)-2'-deoxyribonucleotide-DNA = a 3'-end 2'-deoxyribonucleotide-(2,3-dehydro-2,3-deoxyribose 5'-phosphate)-DNA + a 5'-end 5'-phospho-2'-deoxyribonucleoside-DNA + H(+). Functionally, involved in base excision repair of DNA damaged by oxidation or by mutagenic agents. Acts as a DNA glycosylase that recognizes and removes damaged bases. Has a preference for oxidized purines, such as 7,8-dihydro-8-oxoguanine (8-oxoG). Has AP (apurinic/apyrimidinic) lyase activity and introduces nicks in the DNA strand. Cleaves the DNA backbone by beta-delta elimination to generate a single-strand break at the site of the removed base with both 3'- and 5'-phosphates. This is Formamidopyrimidine-DNA glycosylase from Aliivibrio fischeri (strain ATCC 700601 / ES114) (Vibrio fischeri).